The following is a 501-amino-acid chain: Lysine--tRNA ligase (501 aa).

Mg(2+) is bound by residues glutamate 410 and glutamate 417.

Belongs to the class-II aminoacyl-tRNA synthetase family. Homodimer. The cofactor is Mg(2+).

The protein resides in the cytoplasm. It carries out the reaction tRNA(Lys) + L-lysine + ATP = L-lysyl-tRNA(Lys) + AMP + diphosphate. The protein is Lysine--tRNA ligase of Shewanella pealeana (strain ATCC 700345 / ANG-SQ1).